The following is a 212-amino-acid chain: Small ribosomal subunit protein eS6 (212 aa).

The protein belongs to the eukaryotic ribosomal protein eS6 family.

This is Small ribosomal subunit protein eS6 from Metallosphaera sedula (strain ATCC 51363 / DSM 5348 / JCM 9185 / NBRC 15509 / TH2).